Here is a 151-residue protein sequence, read N- to C-terminus: Deoxyuridine 5'-triphosphate nucleotidohydrolase (151 aa).

Residues 70 to 72, Asn-83, 87 to 89, and Met-97 each bind substrate; these read RSG and LID.

The protein belongs to the dUTPase family. The cofactor is Mg(2+).

The enzyme catalyses dUTP + H2O = dUMP + diphosphate + H(+). The protein operates within pyrimidine metabolism; dUMP biosynthesis; dUMP from dCTP (dUTP route): step 2/2. Functionally, this enzyme is involved in nucleotide metabolism: it produces dUMP, the immediate precursor of thymidine nucleotides and it decreases the intracellular concentration of dUTP so that uracil cannot be incorporated into DNA. This chain is Deoxyuridine 5'-triphosphate nucleotidohydrolase, found in Yersinia pseudotuberculosis serotype O:1b (strain IP 31758).